Here is a 258-residue protein sequence, read N- to C-terminus: UPF0246 protein Bpro_3713 (258 aa).

The protein belongs to the UPF0246 family.

This Polaromonas sp. (strain JS666 / ATCC BAA-500) protein is UPF0246 protein Bpro_3713.